Consider the following 308-residue polypeptide: SAP30-binding protein (308 aa).

The tract at residues 15–101 is disordered; that stretch reads AEDSEPESDG…EAEKRDPQEL (87 aa). Over residues 16–26 the composition is skewed to acidic residues; the sequence is EDSEPESDGEA. A phosphoserine mark is found at serine 18, serine 22, serine 43, and serine 52. The segment covering 57 to 78 has biased composition (acidic residues); it reads DEDGYEEEEDENSRQSEDDDSE. Residues 79-99 are compositionally biased toward basic and acidic residues; that stretch reads TEKPEADDPKDNTEAEKRDPQ. Lysine 95 participates in a covalent cross-link: Glycyl lysine isopeptide (Lys-Gly) (interchain with G-Cter in SUMO2). A Phosphoserine modification is found at serine 113. Residues lysine 220, lysine 304, and lysine 305 each participate in a glycyl lysine isopeptide (Lys-Gly) (interchain with G-Cter in SUMO2) cross-link.

The protein belongs to the HCNGP family. Interacts with histone deacetylase complex subunit SAP30.

It is found in the nucleus. Functionally, plays a role in transcriptional repression by promoting histone deacetylase activity, leading to deacetylation of histone H3. May be involved in the regulation of beta-2-microglobulin genes. In terms of biological role, (Microbial infection) Involved in transcriptional repression of HHV-1 genes TK and gC. This is SAP30-binding protein from Homo sapiens (Human).